Consider the following 179-residue polypeptide: Segregation and condensation protein B (179 aa).

Belongs to the ScpB family. In terms of assembly, homodimer. Homodimerization may be required to stabilize the binding of ScpA to the Smc head domains. Component of a cohesin-like complex composed of ScpA, ScpB and the Smc homodimer, in which ScpA and ScpB bind to the head domain of Smc. The presence of the three proteins is required for the association of the complex with DNA.

The protein localises to the cytoplasm. In terms of biological role, participates in chromosomal partition during cell division. May act via the formation of a condensin-like complex containing Smc and ScpA that pull DNA away from mid-cell into both cell halves. The sequence is that of Segregation and condensation protein B from Streptococcus equi subsp. equi (strain 4047).